The following is a 304-amino-acid chain: Acetylglutamate kinase (304 aa).

Substrate is bound by residues 77 to 78 (GG), arginine 99, and asparagine 193.

It belongs to the acetylglutamate kinase family. ArgB subfamily.

It is found in the cytoplasm. It carries out the reaction N-acetyl-L-glutamate + ATP = N-acetyl-L-glutamyl 5-phosphate + ADP. Its pathway is amino-acid biosynthesis; L-arginine biosynthesis; N(2)-acetyl-L-ornithine from L-glutamate: step 2/4. Functionally, catalyzes the ATP-dependent phosphorylation of N-acetyl-L-glutamate. The sequence is that of Acetylglutamate kinase from Chlorobium limicola (strain DSM 245 / NBRC 103803 / 6330).